The primary structure comprises 116 residues: Aspartate 1-decarboxylase (116 aa).

Ser-25 functions as the Schiff-base intermediate with substrate; via pyruvic acid in the catalytic mechanism. Ser-25 is subject to Pyruvic acid (Ser). Thr-57 serves as a coordination point for substrate. Tyr-58 acts as the Proton donor in catalysis. Substrate is bound at residue 72 to 74 (GAA).

This sequence belongs to the PanD family. As to quaternary structure, heterooctamer of four alpha and four beta subunits. Pyruvate is required as a cofactor. Post-translationally, is synthesized initially as an inactive proenzyme, which is activated by self-cleavage at a specific serine bond to produce a beta-subunit with a hydroxyl group at its C-terminus and an alpha-subunit with a pyruvoyl group at its N-terminus.

The protein localises to the cytoplasm. It catalyses the reaction L-aspartate + H(+) = beta-alanine + CO2. The protein operates within cofactor biosynthesis; (R)-pantothenate biosynthesis; beta-alanine from L-aspartate: step 1/1. Catalyzes the pyruvoyl-dependent decarboxylation of aspartate to produce beta-alanine. The polypeptide is Aspartate 1-decarboxylase (Helicobacter pylori (strain HPAG1)).